The primary structure comprises 213 residues: Uridine kinase (213 aa).

15 to 22 (GASASGKS) lines the ATP pocket.

The protein belongs to the uridine kinase family.

It is found in the cytoplasm. The catalysed reaction is uridine + ATP = UMP + ADP + H(+). It catalyses the reaction cytidine + ATP = CMP + ADP + H(+). Its pathway is pyrimidine metabolism; CTP biosynthesis via salvage pathway; CTP from cytidine: step 1/3. It participates in pyrimidine metabolism; UMP biosynthesis via salvage pathway; UMP from uridine: step 1/1. The polypeptide is Uridine kinase (Pectobacterium atrosepticum (strain SCRI 1043 / ATCC BAA-672) (Erwinia carotovora subsp. atroseptica)).